The sequence spans 508 residues: Light-independent protochlorophyllide reductase subunit B (508 aa).

A [4Fe-4S] cluster-binding site is contributed by Asp-36. Asp-294 serves as the catalytic Proton donor. Position 429–430 (429–430 (GM)) interacts with substrate.

It belongs to the ChlB/BchB/BchZ family. In terms of assembly, protochlorophyllide reductase is composed of three subunits; ChlL, ChlN and ChlB. Forms a heterotetramer of two ChlB and two ChlN subunits. Requires [4Fe-4S] cluster as cofactor.

The enzyme catalyses chlorophyllide a + oxidized 2[4Fe-4S]-[ferredoxin] + 2 ADP + 2 phosphate = protochlorophyllide a + reduced 2[4Fe-4S]-[ferredoxin] + 2 ATP + 2 H2O. It participates in porphyrin-containing compound metabolism; chlorophyll biosynthesis (light-independent). In terms of biological role, component of the dark-operative protochlorophyllide reductase (DPOR) that uses Mg-ATP and reduced ferredoxin to reduce ring D of protochlorophyllide (Pchlide) to form chlorophyllide a (Chlide). This reaction is light-independent. The NB-protein (ChlN-ChlB) is the catalytic component of the complex. The polypeptide is Light-independent protochlorophyllide reductase subunit B (Crocosphaera subtropica (strain ATCC 51142 / BH68) (Cyanothece sp. (strain ATCC 51142))).